Consider the following 338-residue polypeptide: Phosphate acyltransferase (338 aa).

It belongs to the PlsX family. As to quaternary structure, homodimer. Probably interacts with PlsY.

Its subcellular location is the cytoplasm. It catalyses the reaction a fatty acyl-[ACP] + phosphate = an acyl phosphate + holo-[ACP]. The protein operates within lipid metabolism; phospholipid metabolism. Functionally, catalyzes the reversible formation of acyl-phosphate (acyl-PO(4)) from acyl-[acyl-carrier-protein] (acyl-ACP). This enzyme utilizes acyl-ACP as fatty acyl donor, but not acyl-CoA. This is Phosphate acyltransferase from Alcanivorax borkumensis (strain ATCC 700651 / DSM 11573 / NCIMB 13689 / SK2).